The following is a 729-amino-acid chain: Heterogeneous nuclear ribonucleoprotein M (729 aa).

The span at 1 to 13 (MAAGVEAAAEVAA) shows a compositional bias: low complexity. The disordered stretch occupies residues 1 to 65 (MAAGVEAAAE…GGNRFEPYSN (65 aa)). N-acetylalanine is present on Ala-2. Residue Lys-17 forms a Glycyl lysine isopeptide (Lys-Gly) (interchain with G-Cter in SUMO2) linkage. Ser-29 carries the phosphoserine modification. Residues Lys-37, Lys-68, and Lys-82 each participate in a glycyl lysine isopeptide (Lys-Gly) (interchain with G-Cter in SUMO2) cross-link. Basic and acidic residues predominate over residues 37-49 (KGEERPTQNEKRK). RRM domains follow at residues 70 to 148 (YRAF…EDPD) and 203 to 280 (STVF…MDER). Ser-85 is modified (phosphoserine). Residues Lys-87 and Lys-126 each participate in a glycyl lysine isopeptide (Lys-Gly) (interchain with G-Cter in SUMO2) cross-link. An N6-acetyllysine; alternate modification is found at Lys-133. Lys-133 participates in a covalent cross-link: Glycyl lysine isopeptide (Lys-Gly) (interchain with G-Cter in SUMO2); alternate. Glycyl lysine isopeptide (Lys-Gly) (interchain with G-Cter in SUMO2) cross-links involve residues Lys-142 and Lys-144. The residue at position 203 (Ser-203) is a Phosphoserine. Residue Lys-220 forms a Glycyl lysine isopeptide (Lys-Gly) (interchain with G-Cter in SUMO2) linkage. Lys-276 is subject to N6-acetyllysine; alternate. Lys-276 participates in a covalent cross-link: Glycyl lysine isopeptide (Lys-Gly) (interchain with G-Cter in SUMO2); alternate. Residues Lys-284 and Lys-344 each participate in a glycyl lysine isopeptide (Lys-Gly) (interchain with G-Cter in SUMO2) cross-link. Ser-364 and Ser-376 each carry phosphoserine. Glycyl lysine isopeptide (Lys-Gly) (interchain with G-Cter in SUMO2) cross-links involve residues Lys-380 and Lys-387. Residue Ser-396 is modified to Phosphoserine. 4 tandem repeats follow at residues 399 to 404 (GIERMG), 406 to 411 (GIDRIS), 414 to 419 (GMERMG), and 425 to 430 (GMDRVG). Residues 399-607 (GIERMGPGID…ALGAGIERMG (209 aa)) form a 27 X 6 AA repeats of [GEVSTPAN]-[ILMV]-[DE]-[RH]-[MLVI]-[GAV] region. Ser-431 bears the Phosphoserine mark. 3 repeat units span residues 432–437 (EIERMG), 439–444 (VMDRMG), and 445–450 (SVERMG). Ser-451 carries the phosphoserine modification. 4 repeat units span residues 452-457 (SIERMG), 460-465 (GLDHMA), 467-472 (SIERMG), and 474-479 (TMERIG). Residue Ser-467 is modified to Phosphoserine. The residue at position 480 (Ser-480) is a Phosphoserine. 16 repeat units span residues 481-486 (GVERMG), 492-497 (GLERMA), 499-504 (PIDRVG), 506-511 (TIERMG), 513-518 (GVERMG), 520-525 (AIERMG), 527-532 (SMDRMV), 539-544 (SLERMG), 546-551 (VMDRMA), 553-558 (GLERMG), 561-566 (NLERMG), 567-571 (LERMG), 574-579 (SLERMG), 580-584 (LERMG), 587-592 (SLERMG), and 602-607 (GIERMG). Arg-495 is subject to Omega-N-methylarginine. Phosphoserine is present on Ser-527. Ser-574 is subject to Phosphoserine. Position 587 is a phosphoserine (Ser-587). Phosphoserine is present on residues Ser-617, Ser-632, and Ser-636. Residue Lys-650 forms a Glycyl lysine isopeptide (Lys-Gly) (interchain with G-Cter in SUMO2) linkage. Positions 652-728 (CQIFVRNLPF…REIDVRIDRN (77 aa)) constitute an RRM 3 domain. Thr-664 carries the post-translational modification Phosphothreonine. Lys-666 participates in a covalent cross-link: Glycyl lysine isopeptide (Lys-Gly) (interchain with G-Cter in SUMO2). Lys-671 bears the N6-acetyllysine mark. Glycyl lysine isopeptide (Lys-Gly) (interchain with G-Cter in SUMO2) cross-links involve residues Lys-684 and Lys-691. Lys-697 carries the post-translational modification N6-acetyllysine; alternate. Lys-697 participates in a covalent cross-link: Glycyl lysine isopeptide (Lys-Gly) (interchain with G-Cter in SUMO2); alternate. Lys-697 participates in a covalent cross-link: Glycyl lysine isopeptide (Lys-Gly) (interchain with G-Cter in SUMO1); alternate. Residue Ser-700 is modified to Phosphoserine. A Glycyl lysine isopeptide (Lys-Gly) (interchain with G-Cter in SUMO2) cross-link involves residue Lys-715.

As to quaternary structure, identified in the spliceosome C complex. Interacts with PPIA/CYPA. Sumoylated.

Its subcellular location is the nucleus. Functionally, pre-mRNA binding protein in vivo, binds avidly to poly(G) and poly(U) RNA homopolymers in vitro. Involved in splicing. Acts as a receptor for carcinoembryonic antigen in Kupffer cells, may initiate a series of signaling events leading to tyrosine phosphorylation of proteins and induction of IL-1 alpha, IL-6, IL-10 and tumor necrosis factor alpha cytokines. This is Heterogeneous nuclear ribonucleoprotein M (Hnrnpm) from Mus musculus (Mouse).